We begin with the raw amino-acid sequence, 91 residues long: uncharacterized protein (91 aa).

A signal peptide spans 1–21 (MKQLLASPSLQLVTYPASATA).

It belongs to the BhsA/McbA family.

The protein localises to the periplasm. This is an uncharacterized protein from Escherichia coli O157:H7.